Here is a 282-residue protein sequence, read N- to C-terminus: Chorismate dehydratase (282 aa).

It belongs to the MqnA/MqnD family. MqnA subfamily.

It catalyses the reaction chorismate = 3-[(1-carboxyvinyl)-oxy]benzoate + H2O. It participates in quinol/quinone metabolism; menaquinone biosynthesis. In terms of biological role, catalyzes the dehydration of chorismate into 3-[(1-carboxyvinyl)oxy]benzoate, a step in the biosynthesis of menaquinone (MK, vitamin K2). The protein is Chorismate dehydratase of Streptomyces coelicolor (strain ATCC BAA-471 / A3(2) / M145).